Here is a 266-residue protein sequence, read N- to C-terminus: CD82 antigen (266 aa).

The Cytoplasmic portion of the chain corresponds to 1–11 (MGAGCVKVTKY). Residue C5 is the site of S-palmitoyl cysteine attachment. The chain crosses the membrane as a helical span at residues 12 to 32 (FLFLFNLLFFILGAVILGFGV). At 33-53 (WILADKNSFISVLQTSSSSLQ) the chain is on the extracellular side. The chain crosses the membrane as a helical span at residues 54–72 (VGAYVFIGVGAITIVMGFL). The Cytoplasmic segment spans residues 73–83 (GCIGAVNEVRC). C74 carries the S-palmitoyl cysteine lipid modification. The helical transmembrane segment at 84 to 110 (LLGLYFVFLLLILIAQVTVGVLFYFNA) threads the bilayer. Topologically, residues 111–227 (DKLKKEMGNT…KAQAWLQENF (117 aa)) are extracellular. Residues N127, N131, N157, and N197 are each glycosylated (N-linked (GlcNAc...) asparagine). Residues 228-249 (GILLGVCAGVAVIELLGLFLSI) traverse the membrane as a helical segment. The Cytoplasmic segment spans residues 250–266 (CLCRYIHSEDYSKVPKY).

Belongs to the tetraspanin (TM4SF) family. As to quaternary structure, forms homooligomers. Interacts directly with IGSF8. Interacts with EGFR. Interacts with VEGFA and PDGFA. Interacts with ITGA4. Interacts with ITGA6; this interaction reduces ITGA6 cell surface expression. Interacts with ITGB1. Interacts with TLR4; this interaction inhibits TLR4-mediated signaling pathway. Interacts with TLR9. Interacts with PLAUR. Post-translationally, palmitoylated. Palmitoylation contributes to oligomerization and surface expression. As to expression, highest expression in the spleen and the kidney. Low expression in skeletal muscle and in the heart.

The protein resides in the cell membrane. It localises to the cytoplasmic vesicle. Its subcellular location is the phagosome. In terms of biological role, structural component of specialized membrane microdomains known as tetraspanin-enriched microdomains (TERMs), which act as platforms for receptor clustering and signaling. Participates thereby in diverse biological functions such as cell signal transduction, adhesion, migration and protein trafficking. Acts as a attenuator of EGF signaling, facilitating ligand-induced endocytosis of the receptor and its subsequent desensitization. Mechanistically, modulates ligand-induced ubiquitination and trafficking of EGFR via E3 ligase CBL phosphorylation by PKC. Increases cell-matrix adhesion by regulating the membrane organization of integrin alpha4/ITA4. Modulates adhesion and suppresses cell migration through other integrins such as the alpha6/ITGA6 and beta1/ITGB1. Decreases cell-associated plasminogen activation by interfering with the interaction between urokinase-type plasminogen activator/PLAU and its receptor PLAUR. Associates with CD4 or CD8 and delivers costimulatory signals for the TCR/CD3 pathway. Plays a role in the restrains phagocyte migration but supports macrophage activation. Plays a role in TLR9 trafficking to acidified CpG-containing compartments by controlling interaction between TLR9 and VAMP3 and subsequent myddosome assembly. Inhibits LPS-induced inflammatory response by preventing binding of LPS to TLR4 on the cell surface. Plays a role in the activation of macrophages into anti-inflammatory phenotypes. Independently of Toll-like receptor (TLR) signaling, is recruited to pathogen-containing phagosomes prior to fusion with lysosomes and participates in antigen presentation. Also acts to control angiogenesis and switch angiogenic milieu to quiescent state by binding and sequestering VEGFA and PDGFA to inhibit the signaling they trigger via their respective cell surface receptor. This Mus musculus (Mouse) protein is CD82 antigen (Cd82).